We begin with the raw amino-acid sequence, 212 residues long: dTTP/UTP pyrophosphatase (212 aa).

D88 serves as the catalytic Proton acceptor.

Belongs to the Maf family. YhdE subfamily. A divalent metal cation is required as a cofactor.

It localises to the cytoplasm. It carries out the reaction dTTP + H2O = dTMP + diphosphate + H(+). It catalyses the reaction UTP + H2O = UMP + diphosphate + H(+). Functionally, nucleoside triphosphate pyrophosphatase that hydrolyzes dTTP and UTP. May have a dual role in cell division arrest and in preventing the incorporation of modified nucleotides into cellular nucleic acids. This is dTTP/UTP pyrophosphatase from Colwellia psychrerythraea (strain 34H / ATCC BAA-681) (Vibrio psychroerythus).